We begin with the raw amino-acid sequence, 47 residues long: Potassium channel toxin alpha-KTx 7.1 (47 aa).

An N-terminal signal peptide occupies residues 1-12 (RGSVDYKDDDDK). Disulfide bonds link cysteine 16–cysteine 37, cysteine 22–cysteine 42, and cysteine 26–cysteine 44.

It belongs to the short scorpion toxin superfamily. Potassium channel inhibitor family. Alpha-KTx 07 subfamily. As to expression, expressed by the venom gland.

It localises to the secreted. Its function is as follows. Potent inhibitor of the A-type voltage-gated potassium channels. Most potent inhibitor of Kv1.2/KCNA2 channels. Reversibly block the Shaker B potassium-channels (Kv1.1 sub-family). This Pandinus imperator (Emperor scorpion) protein is Potassium channel toxin alpha-KTx 7.1 (PTX-1).